A 507-amino-acid polypeptide reads, in one-letter code: Cyclin-dependent kinase-like 2 (507 aa).

The region spanning 4–289 (YENLGLVGEG…CADLLHHDFF (286 aa)) is the Protein kinase domain. ATP contacts are provided by residues 10-18 (VGEGSYGMV) and K33. Residues 45–51 (KKIAMRE) carry the [NKR]KIAxRE motif. The active-site Proton acceptor is the D126. Residues 365–392 (KTEKGTRASNGSCLHDNGTSHKGLSSTS) are disordered.

This sequence belongs to the protein kinase superfamily. CMGC Ser/Thr protein kinase family. CDC2/CDKX subfamily.

The protein resides in the cytoplasm. The protein localises to the nucleus. The catalysed reaction is L-seryl-[protein] + ATP = O-phospho-L-seryl-[protein] + ADP + H(+). It catalyses the reaction L-threonyl-[protein] + ATP = O-phospho-L-threonyl-[protein] + ADP + H(+). This Rattus norvegicus (Rat) protein is Cyclin-dependent kinase-like 2.